The primary structure comprises 95 residues: DNA-directed RNA polymerase subunit Rpo6 (95 aa).

Belongs to the archaeal Rpo6/eukaryotic RPB6 RNA polymerase subunit family. As to quaternary structure, part of the 13-subunit RNA polymerase complex.

The protein localises to the cytoplasm. The enzyme catalyses RNA(n) + a ribonucleoside 5'-triphosphate = RNA(n+1) + diphosphate. In terms of biological role, DNA-dependent RNA polymerase (RNAP) catalyzes the transcription of DNA into RNA using the four ribonucleoside triphosphates as substrates. This is DNA-directed RNA polymerase subunit Rpo6 from Saccharolobus solfataricus (strain ATCC 35092 / DSM 1617 / JCM 11322 / P2) (Sulfolobus solfataricus).